The primary structure comprises 813 residues: Hyaluronate lyase HylB (813 aa).

The segment at residues 1–32 (MFGTPSRRTFLTASALSAMALAASPTVTDAIA) is a signal peptide (tat-type signal). Active-site residues include Asn222, His272, and Tyr281.

The protein belongs to the polysaccharide lyase 8 family. Predicted to be exported by the Tat system. The position of the signal peptide cleavage has not been experimentally proven.

The protein resides in the secreted. It catalyses the reaction [hyaluronan](n) = n 3-(4-deoxy-beta-D-gluc-4-enuronosyl)-N-acetyl-D-glucosamine + H2O. In terms of biological role, degrades hyaluronic acid (HA) exclusively into HA disaccharides (HA-2). Produced HA-2s confer anti-inflammatory properties leading to reduced immunopathology in the mouse model of acne. This is Hyaluronate lyase HylB from Cutibacterium acnes (strain DSM 16379 / KPA171202) (Propionibacterium acnes).